The following is a 542-amino-acid chain: Glutamyl-tRNA(Gln) amidotransferase subunit B, mitochondrial (542 aa).

Belongs to the GatB/GatE family. GatB subfamily. Subunit of the heterotrimeric GatFAB amidotransferase (AdT) complex, composed of A, B and F subunits.

It is found in the mitochondrion. The enzyme catalyses L-glutamyl-tRNA(Gln) + L-glutamine + ATP + H2O = L-glutaminyl-tRNA(Gln) + L-glutamate + ADP + phosphate + H(+). Allows the formation of correctly charged Gln-tRNA(Gln) through the transamidation of misacylated Glu-tRNA(Gln) in the mitochondria. The reaction takes place in the presence of glutamine and ATP through an activated gamma-phospho-Glu-tRNA(Gln). This is Glutamyl-tRNA(Gln) amidotransferase subunit B, mitochondrial from Candida glabrata (strain ATCC 2001 / BCRC 20586 / JCM 3761 / NBRC 0622 / NRRL Y-65 / CBS 138) (Yeast).